Consider the following 342-residue polypeptide: Delta-aminolevulinic acid dehydratase (342 aa).

3 residues coordinate Zn(2+): C133, C135, and C143. K210 (schiff-base intermediate with substrate) is an active-site residue. Positions 220 and 232 each coordinate 5-aminolevulinate. Phosphoserine is present on S254. K263 acts as the Schiff-base intermediate with substrate in catalysis. 5-aminolevulinate-binding residues include S290 and Y329.

Belongs to the ALAD family. As to quaternary structure, homooctamer. The cofactor is Zn(2+).

The catalysed reaction is 2 5-aminolevulinate = porphobilinogen + 2 H2O + H(+). It participates in porphyrin-containing compound metabolism; protoporphyrin-IX biosynthesis; coproporphyrinogen-III from 5-aminolevulinate: step 1/4. Inhibited by divalent lead ions. In terms of biological role, catalyzes an early step in the biosynthesis of tetrapyrroles. Binds two molecules of 5-aminolevulinate per subunit, each at a distinct site, and catalyzes their condensation to form porphobilinogen. The protein is Delta-aminolevulinic acid dehydratase (HEM2) of Saccharomyces cerevisiae (strain ATCC 204508 / S288c) (Baker's yeast).